The chain runs to 515 residues: Maturase K (515 aa).

It belongs to the intron maturase 2 family. MatK subfamily.

The protein localises to the plastid. It is found in the chloroplast. Its function is as follows. Usually encoded in the trnK tRNA gene intron. Probably assists in splicing its own and other chloroplast group II introns. This Zingiber mioga (Myoga ginger) protein is Maturase K.